Reading from the N-terminus, the 977-residue chain is Zinc finger CCCH domain-containing protein 7B (977 aa).

3 TPR repeats span residues 1-27 (MERQ…KQEE), 36-69 (VQNL…ADYA), and 82-115 (CKLH…DSES). Serine 217 is subject to Phosphoserine. Residues 248-256 (STDSLDDFS) carry the LD motif; interaction with NSP3 motif. Phosphoserine occurs at positions 364 and 367. The disordered stretch occupies residues 365-403 (FGSTRGSLDKPDSFMEETNSQDHRPPSGAQKPAPSPEPC). 3 consecutive C3H1-type zinc fingers follow at residues 484-508 (LCKD…HQEE), 616-638 (VCRH…HSFI), and 754-782 (PQQY…HSPE). The C2H2-type zinc finger occupies 842 to 866 (YHCWLCGKNSNSKKQWQQHIQSEKH). A C3H1-type 4 zinc finger spans residues 886–914 (MGEFRLCDRLQKGKACPDGDKCRCAHGQE).

(Microbial infection) Interacts (via LD motif) with rotavirus A NSP3 (via the coiled-coil region).

Its subcellular location is the nucleus. Its function is as follows. May be a specific regulator of miRNA biogenesis. Binds to microRNAs MIR7-1, MIR16-2 and MIR29A hairpins recognizing the 'ATA(A/T)' motif in the apical loop. The polypeptide is Zinc finger CCCH domain-containing protein 7B (ZC3H7B) (Homo sapiens (Human)).